The following is a 226-amino-acid chain: UPF0173 metal-dependent hydrolase SRU_1937 (226 aa).

The protein belongs to the UPF0173 family.

The protein is UPF0173 metal-dependent hydrolase SRU_1937 of Salinibacter ruber (strain DSM 13855 / M31).